The chain runs to 699 residues: LMBR1 domain-containing protein 2 homolog (699 aa).

Residues 1-3 (MAY) lie on the Extracellular side of the membrane. A helical membrane pass occupies residues 4–26 (LLTFGIIAALCLASISLYRYGNI). The Cytoplasmic portion of the chain corresponds to 27 to 30 (PRQH). The chain crosses the membrane as a helical span at residues 31 to 51 (ILVTLSVLTAWCFSFLIVFTI). Residues 52–106 (PLDVTSTLYRQCLAEHKLALDAAGNASTTANITPPPECQEPWGMVPESVFPNLWR) lie on the Extracellular side of the membrane. N-linked (GlcNAc...) asparagine glycosylation occurs at Asn76. The helical transmembrane segment at 107 to 127 (IIYWSSQFLTWLIMPLMQSYL) threads the bilayer. Topologically, residues 128–144 (KAGDFTIKGKLKSALIE) are cytoplasmic. Residues 145–165 (NAIYYGSYLFICGVLLIYIAV) traverse the membrane as a helical segment. Residues 166–181 (KGVPLDWQKLKAIASS) are Extracellular-facing. Residues 182–202 (ASNTWGLFLLILLLGYALVEV) traverse the membrane as a helical segment. Topologically, residues 203–381 (PRSLWNNAKP…ECLLKAPFLK (179 aa)) are cytoplasmic. A helical membrane pass occupies residues 382–402 (TLCVVTATMSAMVVWSEVTFF). Over 403–426 (SRDPVLSIFANVIYLAKESYDFFT) the chain is Extracellular. The helical transmembrane segment at 427-447 (IEVFSMMVLCYFFYCTYSTIL) threads the bilayer. Over 448–467 (RIRFLNLYYLAPHHQTNEHS) the chain is Cytoplasmic. Residues 468 to 488 (LIFSGMLLCRLTPPMCLNFLG) traverse the membrane as a helical segment. At 489-514 (LIHMDSHIIPERMMETYYTRIMGHMD) the chain is on the extracellular side. Residues 515 to 535 (VIGIISNGFNIYFPMCMLAFC) traverse the membrane as a helical segment. Residues 536–699 (LSTWFSLGSR…PPPRGLFDDV (164 aa)) are Cytoplasmic-facing. Residues 564 to 592 (ELVQEGKDLIAREKRRRQRAEEAMARRRD) are a coiled coil. Residues 669–699 (FRGTSELDPDYEAENERRIVGPPPRGLFDDV) form a disordered region.

This sequence belongs to the LIMR family.

It localises to the membrane. The polypeptide is LMBR1 domain-containing protein 2 homolog (Drosophila pseudoobscura pseudoobscura (Fruit fly)).